The primary structure comprises 328 residues: ATP synthase mitochondrial F1 complex assembly factor 1 (328 aa).

A mitochondrion-targeting transit peptide spans 1–57 (MAAVVVAAAGGAGPAVLQVAGLYRGLCAVRSRALGLGLVSPAQLRVFPVRPGSGRPE).

This sequence belongs to the ATP11 family. In terms of assembly, interacts with ATP5F1B; involved in the assembly of the F1 component of the mitochondrial ATP synthase (ATPase). Weakly expressed in muscle.

Its subcellular location is the mitochondrion inner membrane. In terms of biological role, has a complex stabilizing activity in the assembly of the mitochondrial F1-F0 complex. The polypeptide is ATP synthase mitochondrial F1 complex assembly factor 1 (Homo sapiens (Human)).